The chain runs to 302 residues: Ornithine carbamoyltransferase (302 aa).

Carbamoyl phosphate-binding positions include 52-55 (STRT), Gln79, Arg103, and 130-133 (HPCQ). L-ornithine-binding positions include Asn161, Asp221, and 225-226 (SM). Carbamoyl phosphate-binding positions include 261–262 (CL) and Arg289.

Belongs to the aspartate/ornithine carbamoyltransferase superfamily. OTCase family.

The protein localises to the cytoplasm. The enzyme catalyses carbamoyl phosphate + L-ornithine = L-citrulline + phosphate + H(+). Its pathway is amino-acid biosynthesis; L-arginine biosynthesis; L-arginine from L-ornithine and carbamoyl phosphate: step 1/3. Functionally, reversibly catalyzes the transfer of the carbamoyl group from carbamoyl phosphate (CP) to the N(epsilon) atom of ornithine (ORN) to produce L-citrulline. The protein is Ornithine carbamoyltransferase of Methanospirillum hungatei JF-1 (strain ATCC 27890 / DSM 864 / NBRC 100397 / JF-1).